Consider the following 81-residue polypeptide: Large ribosomal subunit protein bL31B (81 aa).

It belongs to the bacterial ribosomal protein bL31 family. Type B subfamily. Part of the 50S ribosomal subunit.

In Borreliella burgdorferi (strain ATCC 35210 / DSM 4680 / CIP 102532 / B31) (Borrelia burgdorferi), this protein is Large ribosomal subunit protein bL31B.